Reading from the N-terminus, the 269-residue chain is Serine/arginine-rich splicing factor 5 (269 aa).

The RRM 1 domain occupies 4-74; that stretch reads CRVFIGRLNP…ERVTIEHARA (71 aa). Residues 73–105 are disordered; that stretch reads RARSRGGRGRGRYSDRFSSRRPRNDRRNAPPVR. The span at 74-83 shows a compositional bias: basic residues; that stretch reads ARSRGGRGRG. Position 86 is a phosphoserine (Ser-86). In terms of domain architecture, RRM 2 spans 108-189; that stretch reads NRLIVENLSS…SKRHRSRSRS (82 aa). Lys-167 is subject to N6-acetyllysine. The tract at residues 174–269 is disordered; the sequence is IKLIEGSKRH…SRSRSVDSGN (96 aa). A compositionally biased stretch (basic residues) spans 181 to 226; it reads KRHRSRSRSRSRTRSSSRSRSRSRSRRSKSYSRSRSRSRSRSKSRS. A phosphoserine mark is found at Ser-224, Ser-226, Ser-230, Ser-247, and Ser-250. Residues 239–251 show a composition bias toward low complexity; sequence RGSSSRSKSPASV.

It belongs to the splicing factor SR family. Found in a pre-mRNA splicing complex with SRSF4/SFRS4, SRSF5/SFRS5, SNRNP70, SNRPA1, SRRM1 and SRRM2. Interacts with RBMY; the interaction inhibits SRSF5 pre-mRNA splicing. Interacts (via RS domain) with PHF5A (via N-terminus). Extensively phosphorylated on serine residues in the RS domain.

The protein resides in the nucleus. In terms of biological role, may be required for progression through G1 and entry into S phase of cell growth. May play a regulatory role in pre-mRNA splicing. Autoregulates its own expression. Plays a role in constitutive splicing and can modulate the selection of alternative splice sites. The protein is Serine/arginine-rich splicing factor 5 (Srsf5) of Mus musculus (Mouse).